We begin with the raw amino-acid sequence, 316 residues long: Aspartate carbamoyltransferase catalytic subunit (316 aa).

Carbamoyl phosphate contacts are provided by R66 and T67. L-aspartate is bound at residue K94. Positions 116, 146, and 149 each coordinate carbamoyl phosphate. L-aspartate is bound by residues R179 and R234. Residues G275 and P276 each contribute to the carbamoyl phosphate site.

Belongs to the aspartate/ornithine carbamoyltransferase superfamily. ATCase family. In terms of assembly, heterododecamer (2C3:3R2) of six catalytic PyrB chains organized as two trimers (C3), and six regulatory PyrI chains organized as three dimers (R2).

The catalysed reaction is carbamoyl phosphate + L-aspartate = N-carbamoyl-L-aspartate + phosphate + H(+). The protein operates within pyrimidine metabolism; UMP biosynthesis via de novo pathway; (S)-dihydroorotate from bicarbonate: step 2/3. Functionally, catalyzes the condensation of carbamoyl phosphate and aspartate to form carbamoyl aspartate and inorganic phosphate, the committed step in the de novo pyrimidine nucleotide biosynthesis pathway. This Nitrosomonas eutropha (strain DSM 101675 / C91 / Nm57) protein is Aspartate carbamoyltransferase catalytic subunit.